A 1189-amino-acid chain; its full sequence is Phosphinothricin tripeptide synthetase PhsB (1189 aa).

Residues 5-80 (QTDDVVTGRI…ALAKRIRASR (76 aa)) form the Carrier 1 domain. Ser-40 is subject to O-(pantetheine 4'-phosphoryl)serine. Disordered regions lie at residues 75–97 (RIRASRSTAPTASGPPRTAPVDS) and 454–476 (TPDRDGREPGEGPFAREESGGDT). Positions 100 to 541 (TAPLTFQQEP…VALLPLQEPA (442 aa)) are condensation. A compositionally biased stretch (basic and acidic residues) spans 455-472 (PDRDGREPGEGPFAREES). Residues 572-969 (AQAHRTPDAV…GREDGQVKLR (398 aa)) are adenylation. A disordered region spans residues 1045 to 1081 (DRVPLTPSGKTDRKALPDPAAGEQPRSGRGAAPGTPA). The region spanning 1076–1151 (APGTPAEREL…DFALAVVTAQ (76 aa)) is the Carrier 2 domain. Ser-1111 carries the O-(pantetheine 4'-phosphoryl)serine modification.

It belongs to the NRP synthetase family. Pantetheine 4'-phosphate serves as cofactor.

The enzyme catalyses holo-[peptidyl-carrier protein] + L-alanine + ATP = L-alanyl-[peptidyl-carrier protein] + AMP + diphosphate. It functions in the pathway secondary metabolite biosynthesis; bialaphos biosynthesis. In terms of biological role, involved in the biosynthesis of phosphinothricin tripeptide (PTT), also known as bialaphos (BA), a natural-product antibiotic and potent herbicide. Adenylates L-alanine and loads it onto a peptidyl carrier domain via a thioester linkage to the phosphopanthetheine moiety. Shows weaker activity with aminobutyric acid and L-serine. The sequence is that of Phosphinothricin tripeptide synthetase PhsB from Streptomyces viridochromogenes (strain DSM 40736 / JCM 4977 / BCRC 1201 / Tue 494).